Here is a 428-residue protein sequence, read N- to C-terminus: Adenylosuccinate synthetase (428 aa).

Residues 11 to 17 (GDEGKGK) and 39 to 41 (GHT) each bind GTP. The Proton acceptor role is filled by aspartate 12. Residues aspartate 12 and glycine 39 each contribute to the Mg(2+) site. IMP contacts are provided by residues 12-15 (DEGK), 37-40 (NAGH), threonine 130, arginine 144, asparagine 226, threonine 241, and arginine 305. Histidine 40 (proton donor) is an active-site residue. 301-307 (VTTGRKR) lines the substrate pocket. Residues arginine 307, 333–335 (KLD), and 415–417 (GTG) each bind GTP.

Belongs to the adenylosuccinate synthetase family. As to quaternary structure, homodimer. The cofactor is Mg(2+).

It is found in the cytoplasm. The catalysed reaction is IMP + L-aspartate + GTP = N(6)-(1,2-dicarboxyethyl)-AMP + GDP + phosphate + 2 H(+). The protein operates within purine metabolism; AMP biosynthesis via de novo pathway; AMP from IMP: step 1/2. In terms of biological role, plays an important role in the de novo pathway and in the salvage pathway of purine nucleotide biosynthesis. Catalyzes the first committed step in the biosynthesis of AMP from IMP. This chain is Adenylosuccinate synthetase, found in Candida dubliniensis (strain CD36 / ATCC MYA-646 / CBS 7987 / NCPF 3949 / NRRL Y-17841) (Yeast).